A 313-amino-acid polypeptide reads, in one-letter code: MPIKIDKKLPAVEILSSENIFVMDDDRADHQDIRPLNILVLNLMPQKMVTETQILRHLANTPLQLTIDFLYMSSHQSKTTRAEHMETFYKTFDEVKNRYFDGLIITGAPVEHLPFEAVDYWEEFQQVIEWSKTHVFSTLHICWGAQAGLYARYGVDKHQMTRKLSGVYSQSADSNNLLFRGFDDEFYAPHSRHTEVLKEDIVNLTNLEILSYGEDTGLSVLASRDLREVYSFGHMEYDRDTLSKEYFRDLKAGKNPHIPENYFKNDDVHETPALCWSSAAALFFNNWINYAVYQETPFDWENPENDASYFAYL.

Catalysis depends on cysteine 142, which acts as the Acyl-thioester intermediate. Lysine 163 and serine 191 together coordinate substrate. Histidine 234 (proton acceptor) is an active-site residue. Glutamate 236 is an active-site residue. A substrate-binding site is contributed by arginine 248.

This sequence belongs to the MetA family.

It is found in the cytoplasm. The enzyme catalyses L-homoserine + acetyl-CoA = O-acetyl-L-homoserine + CoA. Its pathway is amino-acid biosynthesis; L-methionine biosynthesis via de novo pathway; O-acetyl-L-homoserine from L-homoserine: step 1/1. In terms of biological role, transfers an acetyl group from acetyl-CoA to L-homoserine, forming acetyl-L-homoserine. In Streptococcus gordonii (strain Challis / ATCC 35105 / BCRC 15272 / CH1 / DL1 / V288), this protein is Homoserine O-acetyltransferase.